The sequence spans 104 residues: Inclusion membrane protein F (104 aa).

The next 2 helical transmembrane spans lie at 39 to 59 (LVVALAALVLNGALCVLSLVA) and 70 to 90 (LAVLVATTLASFLCAACVLFI).

The protein resides in the secreted. It is found in the host vacuole. It localises to the host pathogen-containing vacuole. The protein localises to the host pathogen-containing vacuole membrane. Its function is as follows. Inclusion membrane protein probably involved in early modification events of the chlamydial inclusion. This Chlamydia trachomatis serovar D (strain ATCC VR-885 / DSM 19411 / UW-3/Cx) protein is Inclusion membrane protein F (incF).